The primary structure comprises 446 residues: Inward rectifier potassium channel 4 (446 aa).

Over 1-55 the chain is Cytoplasmic; the sequence is MHGHSRNGQAHVPRRKRRNRFVKKNGQCNVYFANLSNKSQRYMADIFTTCVDTRW. The helical transmembrane segment at 56 to 80 threads the bilayer; sequence RYMLMIFSAAFLVSWLFFGLLFWCI. Topologically, residues 81–120 are extracellular; it reads AFFHGDLEPSPSGPTAGGPGGNGGGAAPTAAKPCIMHVNG. Residues 91–111 form a val/Gly/Ala/Pro stretch region; that stretch reads PSGPTAGGPGGNGGGAAPTAA. The helical; Pore-forming intramembrane region spans 121 to 132; that stretch reads FLGAFLFSVETQ. Residues 133 to 139 constitute an intramembrane region (pore-forming); that stretch reads TTIGYGF. A Selectivity filter motif is present at residues 134–139; the sequence is TIGYGF. Topologically, residues 140 to 148 are extracellular; sequence RCVTEECPL. Residues 149 to 170 form a helical membrane-spanning segment; sequence AVIAVVVQSIVGCVIDSFMIGT. The Cytoplasmic segment spans residues 171–446; that stretch reads IMAKMPRPKK…NISYRRESAI (276 aa). The PDZ-binding motif lies at 444–446; it reads SAI.

The protein belongs to the inward rectifier-type potassium channel (TC 1.A.2.1) family. KCNJ4 subfamily. In terms of assembly, homomultimeric and heteromultimeric association with KCNJ2 and KCNJ12. Interacts with DLG2 and DLG4. Associates, via its PDZ-recognition domain, with a complex containing LIN7A, LIN7B, LIN7C, DLG1, CASK and APBA1. Interacts with TAX1BP3. TAX1BP3 competes with LIN7 family members for KCNJ4 binding. As to expression, detected in kidney distal convoluted tubules (at protein level). Widely expressed throughout the brain. Also found in some peripheral tissues.

It is found in the cell membrane. The protein localises to the cytoplasmic vesicle membrane. Its subcellular location is the postsynaptic cell membrane. It catalyses the reaction K(+)(in) = K(+)(out). Its function is as follows. Inward rectifier potassium channels are characterized by a greater tendency to allow potassium to flow into the cell rather than out of it. Their voltage dependence is regulated by the concentration of extracellular potassium; as external potassium is raised, the voltage range of the channel opening shifts to more positive voltages. The inward rectification is mainly due to the blockage of outward current by internal magnesium. Can be blocked by extracellular barium and cesium. In Rattus norvegicus (Rat), this protein is Inward rectifier potassium channel 4 (Kcnj4).